A 334-amino-acid polypeptide reads, in one-letter code: TPR repeat-containing protein YsoA (334 aa).

TPR repeat units follow at residues 17–50 (KDRL…DDTE), 52–84 (DLHL…GYGH), and 195–230 (HPII…EPSE).

The protein is TPR repeat-containing protein YsoA (ysoA) of Bacillus subtilis (strain 168).